Consider the following 291-residue polypeptide: Acetyl-coenzyme A carboxylase carboxyl transferase subunit beta (291 aa).

The region spanning 29–291 is the CoA carboxyltransferase N-terminal domain; that stretch reads LWSKCPECGE…MHQQPAAVSA (263 aa). Residues Cys33, Cys36, Cys52, and Cys55 each contribute to the Zn(2+) site. The C4-type zinc-finger motif lies at 33-55; the sequence is CPECGEVVYRKDLIANASVCASC.

It belongs to the AccD/PCCB family. In terms of assembly, acetyl-CoA carboxylase is a heterohexamer composed of biotin carboxyl carrier protein (AccB), biotin carboxylase (AccC) and two subunits each of ACCase subunit alpha (AccA) and ACCase subunit beta (AccD). Zn(2+) is required as a cofactor.

The protein localises to the cytoplasm. It carries out the reaction N(6)-carboxybiotinyl-L-lysyl-[protein] + acetyl-CoA = N(6)-biotinyl-L-lysyl-[protein] + malonyl-CoA. It functions in the pathway lipid metabolism; malonyl-CoA biosynthesis; malonyl-CoA from acetyl-CoA: step 1/1. In terms of biological role, component of the acetyl coenzyme A carboxylase (ACC) complex. Biotin carboxylase (BC) catalyzes the carboxylation of biotin on its carrier protein (BCCP) and then the CO(2) group is transferred by the transcarboxylase to acetyl-CoA to form malonyl-CoA. This is Acetyl-coenzyme A carboxylase carboxyl transferase subunit beta from Synechococcus sp. (strain RCC307).